The following is a 444-amino-acid chain: D(2) dopamine receptor (444 aa).

The Extracellular segment spans residues methionine 1–tyrosine 37. Asparagine 5, asparagine 17, and asparagine 23 each carry an N-linked (GlcNAc...) asparagine glycan. The chain crosses the membrane as a helical span at residues alanine 38–serine 60. Over arginine 61–asparagine 70 the chain is Cytoplasmic. The helical transmembrane segment at tyrosine 71–tyrosine 93 threads the bilayer. The Extracellular portion of the chain corresponds to leucine 94–aspartate 108. Cysteine 107 and cysteine 182 are disulfide-bonded. A helical membrane pass occupies residues isoleucine 109–isoleucine 130. The Cytoplasmic portion of the chain corresponds to aspartate 131 to arginine 151. The chain crosses the membrane as a helical span at residues valine 152–phenylalanine 172. Residues glycine 173–alanine 188 are Extracellular-facing. A helical membrane pass occupies residues phenylalanine 189–tyrosine 213. Positions lysine 211–glutamine 374 are interaction with PPP1R9B. Over isoleucine 214–glutamine 374 the chain is Cytoplasmic. The disordered stretch occupies residues methionine 281 to lysine 332. A helical membrane pass occupies residues methionine 375–leucine 396. The Extracellular portion of the chain corresponds to asparagine 397 to serine 410. Residues cysteine 400 and cysteine 402 are joined by a disulfide bond. A helical membrane pass occupies residues alanine 411–isoleucine 432. Topologically, residues glutamate 433–cysteine 444 are cytoplasmic. Residue cysteine 444 is the site of S-palmitoyl cysteine attachment.

The protein belongs to the G-protein coupled receptor 1 family. Forms homo- and heterooligomers with DRD4. The interaction with DRD4 may modulate agonist-induced downstream signaling. Interacts with CADPS and CADPS2. Interacts with GPRASP1, PPP1R9B and CLIC6. Interacts with ARRB2. Interacts with HTR2A. Interacts with DRD1. Interacts with KCNA2. In terms of processing, palmitoylated. Palmitoylation which is required for proper localization to the plasma membrane and stability of the receptor could be carried on by ZDHHC4, ZDHHC3 and ZDHHC8.

The protein resides in the cell membrane. It localises to the golgi apparatus membrane. Functionally, dopamine receptor whose activity is mediated by G proteins which inhibit adenylyl cyclase. Positively regulates postnatal regression of retinal hyaloid vessels via suppression of VEGFR2/KDR activity, downstream of OPN5. The sequence is that of D(2) dopamine receptor (DRD2) from Bos taurus (Bovine).